The chain runs to 1257 residues: Probable aldehyde oxidase gad-3 (1257 aa).

The 88-residue stretch at 4–91 (TGIFFNVNGK…KTFVITVEGV (88 aa)) folds into the 2Fe-2S ferredoxin-type domain. Residues Cys-43, Cys-48, Cys-51, and Cys-73 each coordinate [2Fe-2S] cluster. The region spanning 229-459 (LKGDRIELLL…TSLEVHIDAL (231 aa)) is the FAD-binding PCMH-type domain. Glu-1208 acts as the Proton acceptor in catalysis.

This sequence belongs to the xanthine dehydrogenase family. Requires [2Fe-2S] cluster as cofactor. It depends on FAD as a cofactor. Mo-molybdopterin serves as cofactor.

The catalysed reaction is an aldehyde + O2 + H2O = a carboxylate + H2O2 + H(+). Its function is as follows. May be involved in the metabolism of 1-methylnicotinamide (MNA). Linked to regulation of longevity through generation of reactive oxygen species, where it probably functions in a pathway downstream of the sirtuin sir-2.1 and the nicotinamide N-methyltransferase anmt-1. The polypeptide is Probable aldehyde oxidase gad-3 (Caenorhabditis elegans).